The sequence spans 291 residues: Probable 2-(5''-triphosphoribosyl)-3'-dephosphocoenzyme-A synthase (291 aa).

It belongs to the CitG/MdcB family.

The enzyme catalyses 3'-dephospho-CoA + ATP = 2'-(5''-triphospho-alpha-D-ribosyl)-3'-dephospho-CoA + adenine. In terms of biological role, involved in the formation of 2-(5''-phosphoribosyl)-3'-dephosphocoenzyme-A, the prosthetic group of the acyl-carrier protein of the malonate decarboxylase. The chain is Probable 2-(5''-triphosphoribosyl)-3'-dephosphocoenzyme-A synthase from Pseudomonas syringae pv. tomato (strain ATCC BAA-871 / DC3000).